Consider the following 159-residue polypeptide: Betainyl-CoA thioesterase (159 aa).

It belongs to the betainyl-CoA thioesterase family.

It carries out the reaction N,N,N-trimethylglycyl-CoA + H2O = glycine betaine + CoA + H(+). It participates in amine and polyamine metabolism; carnitine metabolism. In terms of biological role, catalyzes the cleavage of betainyl-CoA (N,N,N-trimethylglycyl-CoA) into glycine betaine and coenzyme A. Is involved in a L-carnitine degradation pathway that allows P.aeruginosa to grow on L-carnitine as the sole source of carbon and nitrogen. This Pseudomonas aeruginosa (strain ATCC 15692 / DSM 22644 / CIP 104116 / JCM 14847 / LMG 12228 / 1C / PRS 101 / PAO1) protein is Betainyl-CoA thioesterase.